The following is a 1007-amino-acid chain: Glutamate receptor ionotropic, delta-2 (1007 aa).

The signal sequence occupies residues 1–23; it reads MEVFPFLLVLSVWWSRTWDSANA. The interval 24-345 is interaction with CBLN1 homotrimer; the sequence is DSIIHIGAIF…NAFHKKLEDR (322 aa). Over 24-566 the chain is Extracellular; the sequence is DSIIHIGAIF…DMFACLAPFD (543 aa). 3 disulfides stabilise this stretch: C83-C355, C99-C131, and C298-C310. N-linked (GlcNAc...) asparagine glycosylation is present at N293. The N-linked (GlcNAc...) asparagine glycan is linked to N426. Ca(2+)-binding residues include E531, V534, and D535. Residues 567–587 form a helical membrane-spanning segment; it reads LSLWACIAGTVLLVGLLVYLL. Topologically, residues 588–635 are cytoplasmic; that stretch reads NWLNPPRLQMGSMTSTTLYNSMWFVYGSFVQQGGEVPYTTLATRMMMG. A helical membrane pass occupies residues 636-656; it reads AWWLFALIVISSYTANLAAFL. Residues 657–830 are Extracellular-facing; that stretch reads TITRIESSIQ…QKGGALDIKS (174 aa). Residues N713 and N716 are each glycosylated (N-linked (GlcNAc...) asparagine). Residues D753, D755, and S757 each contribute to the Ca(2+) site. Residues 831-851 traverse the membrane as a helical segment; it reads FAGVFCILAAGIVLSCFIAML. Over 852 to 1007 the chain is Cytoplasmic; sequence ETWWNKRKGS…GNDPDRGTSI (156 aa). S883 is subject to Phosphoserine. A Phosphothreonine modification is found at T886. The residue at position 890 (S890) is a Phosphoserine. The tract at residues 921 to 991 is interaction with AP4M1; that stretch reads DFRNTHITTT…MSSIPYQPTP (71 aa). The short motif at 1005–1007 is the PDZ-binding element; it reads TSI. S1006 is subject to Phosphoserine.

This sequence belongs to the glutamate-gated ion channel (TC 1.A.10.1) family. GRID2 subfamily. As to quaternary structure, tetramer; dimer of dimers. Interacts with EML2, MAGI2 (via PDZ domains) and AP4M1. Interacts with BECN1, GOPC, GRID2IP, SHANK1 and SHANK2. Interacts with CBLN2, but not with CBLN4. Interacts with CBLN1 (via C1q domain); the interaction is CBLN1-NRX1 complex formation-dependent; CBLN1-binding is calcium-independent; CBLN1 hexamers anchor GRID2 N-terminal domain dimers to monomeric NRXN1 isoform beta; promotes synaptogenesis and mediates the D-Serine-dependent long term depression signals and AMPA receptor endocytosis.

It is found in the postsynaptic cell membrane. It carries out the reaction Ca(2+)(in) = Ca(2+)(out). The catalysed reaction is Na(+)(in) = Na(+)(out). Functionally, member of the ionotropic glutamate receptor family, which plays a crucial role in synaptic organization and signal transduction in the central nervous system. Although it shares structural features with ionotropic glutamate receptors, does not bind glutamate as a primary ligand. Promotes synaptogenesis and mediates the D-Serine-dependent long term depression signals and AMPA receptor endocytosis of cerebellar parallel fiber-Purkinje cell (PF-PC) synapses through the NRX1B-CBLN1-GRID2 triad complex. In the presence of neurexins and cerebellins, forms cation-selective channels that are proposed to be gated by glycine and D-serine. However, recent research disputes this ligand-gated cation channel activity. Cation-selective ion channel activity can be triggered by GRM1 in Purkinje cells. The chain is Glutamate receptor ionotropic, delta-2 (GRID2) from Homo sapiens (Human).